A 97-amino-acid chain; its full sequence is UPF0235 protein PFL_5841 (97 aa).

The protein belongs to the UPF0235 family.

The chain is UPF0235 protein PFL_5841 from Pseudomonas fluorescens (strain ATCC BAA-477 / NRRL B-23932 / Pf-5).